Here is a 77-residue protein sequence, read N- to C-terminus: MKNYSKNATHLITVLLFSFVVILLIIPSKCEAVSNDMQPLEARSADLVPEPRYIIDVPPRCPPGSKFIKNRCRVIVP.

A signal peptide spans 1-32 (MKNYSKNATHLITVLLFSFVVILLIIPSKCEA). A propeptide spanning residues 33-52 (VSNDMQPLEARSADLVPEPR) is cleaved from the precursor. Residues Cys-61 and Cys-72 are joined by a disulfide bond.

It belongs to the secapin family. As to expression, expressed by the venom gland.

The protein localises to the secreted. In terms of biological role, serine protease inhibitor which exhibits antifibrinolytic, antielastolytic and antimicrobial activities. Displays antimicrobial activity against bacteria and fungi. Likely functions in the innate immune response to microbial infection and possibly in the venom, as an antifibrinolytic agent. Not toxic to mice but does induce slight sedation at higher doses (from 40 mg/kg). At a dose of 80 mg/kg, sedation occurs 15 minutes after injection and is accompanied by piloerection and hypothermia. This Apis mellifera (Honeybee) protein is Secapin.